The chain runs to 184 residues: Ribosome maturation factor RimM (184 aa).

The 80-residue stretch at 101-180 (EGEFFYCDLV…KITTHNAKTL (80 aa)) folds into the PRC barrel domain.

This sequence belongs to the RimM family. Binds ribosomal protein uS19.

The protein localises to the cytoplasm. Functionally, an accessory protein needed during the final step in the assembly of 30S ribosomal subunit, possibly for assembly of the head region. Essential for efficient processing of 16S rRNA. May be needed both before and after RbfA during the maturation of 16S rRNA. It has affinity for free ribosomal 30S subunits but not for 70S ribosomes. The protein is Ribosome maturation factor RimM of Helicobacter pylori (strain ATCC 700392 / 26695) (Campylobacter pylori).